Consider the following 132-residue polypeptide: uncharacterized protein (132 aa).

4 helical membrane-spanning segments follow: residues 6-26, 34-54, 59-79, and 106-126; these read WIYAVFTILIIGLGLGSRAFS, NTYLGDSLWAAMIFTGCGFLF, TMITGIISLSFCFVIEFSQLY, and IEAYTIGIAACAAIELLVLGI.

The protein resides in the cell membrane. This is an uncharacterized protein from Bacillus subtilis (strain 168).